Reading from the N-terminus, the 560-residue chain is Dihydroxy-acid dehydratase (560 aa).

The tract at residues 1 to 20 (MGDNLKKRSSMTTDGDNRAP) is disordered. Cys-52 is a [2Fe-2S] cluster binding site. Asp-84 serves as a coordination point for Mg(2+). Cys-125 lines the [2Fe-2S] cluster pocket. 2 residues coordinate Mg(2+): Asp-126 and Lys-127. Position 127 is an N6-carboxylysine (Lys-127). Cys-197 contacts [2Fe-2S] cluster. Residue Glu-448 coordinates Mg(2+). Ser-474 (proton acceptor) is an active-site residue.

The protein belongs to the IlvD/Edd family. Homodimer. Requires [2Fe-2S] cluster as cofactor. Mg(2+) serves as cofactor.

It catalyses the reaction (2R)-2,3-dihydroxy-3-methylbutanoate = 3-methyl-2-oxobutanoate + H2O. The enzyme catalyses (2R,3R)-2,3-dihydroxy-3-methylpentanoate = (S)-3-methyl-2-oxopentanoate + H2O. It participates in amino-acid biosynthesis; L-isoleucine biosynthesis; L-isoleucine from 2-oxobutanoate: step 3/4. Its pathway is amino-acid biosynthesis; L-valine biosynthesis; L-valine from pyruvate: step 3/4. Functionally, functions in the biosynthesis of branched-chain amino acids. Catalyzes the dehydration of (2R,3R)-2,3-dihydroxy-3-methylpentanoate (2,3-dihydroxy-3-methylvalerate) into 2-oxo-3-methylpentanoate (2-oxo-3-methylvalerate) and of (2R)-2,3-dihydroxy-3-methylbutanoate (2,3-dihydroxyisovalerate) into 2-oxo-3-methylbutanoate (2-oxoisovalerate), the penultimate precursor to L-isoleucine and L-valine, respectively. This is Dihydroxy-acid dehydratase from Leptospira interrogans serogroup Icterohaemorrhagiae serovar Lai (strain 56601).